The primary structure comprises 498 residues: ATP synthase subunit beta, chloroplastic (498 aa).

172–179 contacts ATP; sequence GGAGVGKT.

This sequence belongs to the ATPase alpha/beta chains family. In terms of assembly, F-type ATPases have 2 components, CF(1) - the catalytic core - and CF(0) - the membrane proton channel. CF(1) has five subunits: alpha(3), beta(3), gamma(1), delta(1), epsilon(1). CF(0) has four main subunits: a(1), b(1), b'(1) and c(9-12).

It is found in the plastid. Its subcellular location is the chloroplast thylakoid membrane. The catalysed reaction is ATP + H2O + 4 H(+)(in) = ADP + phosphate + 5 H(+)(out). Functionally, produces ATP from ADP in the presence of a proton gradient across the membrane. The catalytic sites are hosted primarily by the beta subunits. This Jasminum nudiflorum (Winter jasmine) protein is ATP synthase subunit beta, chloroplastic.